The primary structure comprises 277 residues: Release factor glutamine methyltransferase (277 aa).

Residues 119–123, D142, W170, and N184 each bind S-adenosyl-L-methionine; that span reads GTGCG. 184 to 187 contributes to the substrate binding site; that stretch reads NPPY.

Belongs to the protein N5-glutamine methyltransferase family. PrmC subfamily.

The catalysed reaction is L-glutaminyl-[peptide chain release factor] + S-adenosyl-L-methionine = N(5)-methyl-L-glutaminyl-[peptide chain release factor] + S-adenosyl-L-homocysteine + H(+). Methylates the class 1 translation termination release factors RF1/PrfA and RF2/PrfB on the glutamine residue of the universally conserved GGQ motif. This chain is Release factor glutamine methyltransferase, found in Buchnera aphidicola subsp. Baizongia pistaciae (strain Bp).